Consider the following 209-residue polypeptide: Glutathione S-transferase 1-1 (209 aa).

Residues 1–81 form the GST N-terminal domain; sequence MADFYYLPGS…YLVEKYGKTD (81 aa). Residues serine 10, 51–53, and 65–67 contribute to the glutathione site; these read HTI and ESR. The GST C-terminal domain maps to 87-209; the sequence is CPKKRAVINQ…GCLEFKKYFE (123 aa).

This sequence belongs to the GST superfamily. Theta family. Homodimer.

It catalyses the reaction RX + glutathione = an S-substituted glutathione + a halide anion + H(+). It carries out the reaction 1,1,1-trichloro-2,2-bis(4-chlorophenyl)ethane = 1,1-dichloro-2,2-bis(4-chlorophenyl)ethylene + chloride + H(+). Its function is as follows. Conjugation of reduced glutathione to a wide number of exogenous and endogenous hydrophobic electrophiles. Has DDT dehydrochlorinase activity. The sequence is that of Glutathione S-transferase 1-1 (GstD1) from Drosophila simulans (Fruit fly).